A 149-amino-acid chain; its full sequence is Transcriptional repressor NrdR (149 aa).

A zinc finger lies at 3 to 34 (CPFCAMEETKVIDSRLVSDGYQVRRRRECGYC). One can recognise an ATP-cone domain in the interval 49-139 (PKIIKNDGSR…VYLSFDDINQ (91 aa)).

Belongs to the NrdR family. Requires Zn(2+) as cofactor.

In terms of biological role, negatively regulates transcription of bacterial ribonucleotide reductase nrd genes and operons by binding to NrdR-boxes. The polypeptide is Transcriptional repressor NrdR (Histophilus somni (strain 129Pt) (Haemophilus somnus)).